The following is a 279-amino-acid chain: NH(3)-dependent NAD(+) synthetase (279 aa).

39–46 (GLSGGIDS) serves as a coordination point for ATP. A Mg(2+)-binding site is contributed by Asp45. A deamido-NAD(+)-binding site is contributed by Arg122. Thr142 is an ATP binding site. Residue Glu147 participates in Mg(2+) binding. 2 residues coordinate deamido-NAD(+): Lys155 and Asp162. ATP is bound by residues Lys171 and Ser193. 253 to 254 (HK) provides a ligand contact to deamido-NAD(+).

The protein belongs to the NAD synthetase family. As to quaternary structure, homodimer.

The catalysed reaction is deamido-NAD(+) + NH4(+) + ATP = AMP + diphosphate + NAD(+) + H(+). It participates in cofactor biosynthesis; NAD(+) biosynthesis; NAD(+) from deamido-NAD(+) (ammonia route): step 1/1. Its function is as follows. Catalyzes the ATP-dependent amidation of deamido-NAD to form NAD. Uses ammonia as a nitrogen source. This is NH(3)-dependent NAD(+) synthetase from Sulfolobus acidocaldarius (strain ATCC 33909 / DSM 639 / JCM 8929 / NBRC 15157 / NCIMB 11770).